A 335-amino-acid chain; its full sequence is NADH-quinone oxidoreductase subunit H (335 aa).

8 consecutive transmembrane segments (helical) span residues 11 to 31 (VIIS…AGAL), 81 to 101 (VIFT…FAVI), 114 to 134 (IGLL…LFAG), 154 to 174 (VSYE…VGSF), 187 to 207 (LWFI…GVAV), 238 to 258 (FFVG…TLFF), 270 to 290 (QLAF…FILL), and 309 to 329 (FCLP…LLNT).

This sequence belongs to the complex I subunit 1 family. In terms of assembly, NDH-1 is composed of 13 different subunits. Subunits NuoA, H, J, K, L, M, N constitute the membrane sector of the complex.

It localises to the cell inner membrane. It carries out the reaction a quinone + NADH + 5 H(+)(in) = a quinol + NAD(+) + 4 H(+)(out). In terms of biological role, NDH-1 shuttles electrons from NADH, via FMN and iron-sulfur (Fe-S) centers, to quinones in the respiratory chain. The immediate electron acceptor for the enzyme in this species is believed to be ubiquinone. Couples the redox reaction to proton translocation (for every two electrons transferred, four hydrogen ions are translocated across the cytoplasmic membrane), and thus conserves the redox energy in a proton gradient. This subunit may bind ubiquinone. The sequence is that of NADH-quinone oxidoreductase subunit H from Pseudomonas fluorescens (strain SBW25).